The following is a 427-amino-acid chain: Succinate--CoA ligase [ADP-forming] subunit beta, mitochondrial (427 aa).

Residues 1–30 constitute a mitochondrion transit peptide; sequence MYSRKSLSLISKCGQLSRLNAQAALQARRH. One can recognise an ATP-grasp domain in the interval 39–284; it reads AQLLREYGIG…LSQEDPDEVK (246 aa). Residues K76 and 83–85 each bind ATP; that span reads GRG. Phosphoserine is present on S102. An ATP-binding site is contributed by E144. Mg(2+)-binding residues include N236 and D253. S263 and S276 each carry phosphoserine. Residues N304 and 361-363 contribute to the substrate site; that span reads GIV.

The protein belongs to the succinate/malate CoA ligase beta subunit family. Heterodimer of an alpha and a beta subunit. The cofactor is Mg(2+).

The protein localises to the mitochondrion. The catalysed reaction is succinate + ATP + CoA = succinyl-CoA + ADP + phosphate. The protein operates within carbohydrate metabolism; tricarboxylic acid cycle; succinate from succinyl-CoA (ligase route): step 1/1. Succinyl-CoA synthetase functions in the citric acid cycle (TCA), coupling the hydrolysis of succinyl-CoA to the synthesis of ATP and thus represents the only step of substrate-level phosphorylation in the TCA. The beta subunit provides nucleotide specificity of the enzyme and binds the substrate succinate, while the binding sites for coenzyme A and phosphate are found in the alpha subunit. The chain is Succinate--CoA ligase [ADP-forming] subunit beta, mitochondrial from Saccharomyces cerevisiae (strain ATCC 204508 / S288c) (Baker's yeast).